The chain runs to 370 residues: Cytochrome b (370 aa).

A run of 4 helical transmembrane segments spans residues 25 to 45, 69 to 90, 105 to 125, and 170 to 190; these read FGSM…FLAV, WMMQ…YIHI, WLSG…GYVL, and FFAL…LHIL. 2 residues coordinate heme b: His-75 and His-89. His-174 and His-188 together coordinate heme b. Residue His-193 participates in a ubiquinone binding. The next 4 helical transmembrane spans lie at 218–238, 280–300, 312–332, and 339–358; these read YKDM…VSFF, LGGA…PFTH, FMQL…WTAT, and FTTI…ISNP.

Belongs to the cytochrome b family. In terms of assembly, the cytochrome bc1 complex contains 3 respiratory subunits (MT-CYB, CYC1 and UQCRFS1), 2 core proteins (UQCRC1 and UQCRC2) and probably 6 low-molecular weight proteins. Requires heme b as cofactor.

Its subcellular location is the mitochondrion inner membrane. Component of the ubiquinol-cytochrome c reductase complex (complex III or cytochrome b-c1 complex) that is part of the mitochondrial respiratory chain. The b-c1 complex mediates electron transfer from ubiquinol to cytochrome c. Contributes to the generation of a proton gradient across the mitochondrial membrane that is then used for ATP synthesis. In Chilabothrus exsul (Abaco Island boa), this protein is Cytochrome b (MT-CYB).